The primary structure comprises 169 residues: Large ribosomal subunit protein uL10 (169 aa).

This sequence belongs to the universal ribosomal protein uL10 family. In terms of assembly, part of the ribosomal stalk of the 50S ribosomal subunit. The N-terminus interacts with L11 and the large rRNA to form the base of the stalk. The C-terminus forms an elongated spine to which L12 dimers bind in a sequential fashion forming a multimeric L10(L12)X complex.

Forms part of the ribosomal stalk, playing a central role in the interaction of the ribosome with GTP-bound translation factors. The chain is Large ribosomal subunit protein uL10 from Rickettsia felis (strain ATCC VR-1525 / URRWXCal2) (Rickettsia azadi).